The primary structure comprises 334 residues: Glycerol-3-phosphate dehydrogenase [NAD(P)+] (334 aa).

Trp-13, Arg-33, and Lys-106 together coordinate NADPH. The sn-glycerol 3-phosphate site is built by Lys-106, Gly-137, and Ser-139. Position 141 (Ala-141) interacts with NADPH. Residues Lys-192, Asp-245, Ser-255, Arg-256, and Asn-257 each contribute to the sn-glycerol 3-phosphate site. Lys-192 acts as the Proton acceptor in catalysis. Arg-256 contributes to the NADPH binding site. NADPH is bound by residues Val-280 and Glu-282.

This sequence belongs to the NAD-dependent glycerol-3-phosphate dehydrogenase family.

It is found in the cytoplasm. It carries out the reaction sn-glycerol 3-phosphate + NAD(+) = dihydroxyacetone phosphate + NADH + H(+). The catalysed reaction is sn-glycerol 3-phosphate + NADP(+) = dihydroxyacetone phosphate + NADPH + H(+). The protein operates within membrane lipid metabolism; glycerophospholipid metabolism. Functionally, catalyzes the reduction of the glycolytic intermediate dihydroxyacetone phosphate (DHAP) to sn-glycerol 3-phosphate (G3P), the key precursor for phospholipid synthesis. The protein is Glycerol-3-phosphate dehydrogenase [NAD(P)+] of Chlamydia felis (strain Fe/C-56) (Chlamydophila felis).